We begin with the raw amino-acid sequence, 233 residues long: Nickel import system ATP-binding protein NikE (233 aa).

An ABC transporter domain is found at 2-228 (IELKHVTFGY…DRHPYTKELV (227 aa)). 35–42 (GESGCGKS) serves as a coordination point for ATP.

It belongs to the ABC transporter superfamily. As to quaternary structure, the complex is composed of two ATP-binding proteins (NikD and NikE), two transmembrane proteins (NikB and NikC) and a solute-binding protein (NikA).

The protein localises to the cell membrane. It carries out the reaction Ni(2+)(out) + ATP + H2O = Ni(2+)(in) + ADP + phosphate + H(+). Part of the ABC transporter complex NikABCDE (Opp2) involved in nickel import. Probably responsible for energy coupling to the transport system. The chain is Nickel import system ATP-binding protein NikE from Staphylococcus aureus (strain MSSA476).